The sequence spans 432 residues: Adenylosuccinate synthetase 2 (432 aa).

GTP is bound by residues 12–18 (GDEGKGR) and 40–42 (GHT). Asp-13 (proton acceptor) is an active-site residue. Mg(2+)-binding residues include Asp-13 and Gly-40. IMP contacts are provided by residues 13-16 (DEGK), 38-41 (NAGH), Thr-128, Arg-142, Gln-222, Thr-237, and Arg-301. The active-site Proton donor is His-41. Position 297–303 (297–303 (VNTGRPR)) interacts with substrate. Residues Arg-303, 329-331 (KLD), and 411-413 (TTG) contribute to the GTP site.

This sequence belongs to the adenylosuccinate synthetase family. Homodimer. The cofactor is Mg(2+).

It is found in the cytoplasm. The enzyme catalyses IMP + L-aspartate + GTP = N(6)-(1,2-dicarboxyethyl)-AMP + GDP + phosphate + 2 H(+). The protein operates within purine metabolism; AMP biosynthesis via de novo pathway; AMP from IMP: step 1/2. Functionally, plays an important role in the de novo pathway of purine nucleotide biosynthesis. Catalyzes the first committed step in the biosynthesis of AMP from IMP. This Burkholderia lata (strain ATCC 17760 / DSM 23089 / LMG 22485 / NCIMB 9086 / R18194 / 383) protein is Adenylosuccinate synthetase 2.